Reading from the N-terminus, the 103-residue chain is Cystatin-A1 (103 aa).

The Secondary area of contact motif lies at 51–55; that stretch reads QVVAG.

The protein belongs to the cystatin family.

The protein resides in the cytoplasm. Functionally, this is an intracellular thiol proteinase inhibitor. The chain is Cystatin-A1 from Sus scrofa (Pig).